A 354-amino-acid polypeptide reads, in one-letter code: Uroporphyrinogen decarboxylase (354 aa).

Substrate contacts are provided by residues 27 to 31 (RQAGR), F46, D77, Y154, S209, and H327.

The protein belongs to the uroporphyrinogen decarboxylase family. As to quaternary structure, homodimer.

It localises to the cytoplasm. The catalysed reaction is uroporphyrinogen III + 4 H(+) = coproporphyrinogen III + 4 CO2. It participates in porphyrin-containing compound metabolism; protoporphyrin-IX biosynthesis; coproporphyrinogen-III from 5-aminolevulinate: step 4/4. Catalyzes the decarboxylation of four acetate groups of uroporphyrinogen-III to yield coproporphyrinogen-III. This Shewanella oneidensis (strain ATCC 700550 / JCM 31522 / CIP 106686 / LMG 19005 / NCIMB 14063 / MR-1) protein is Uroporphyrinogen decarboxylase.